The sequence spans 428 residues: Sulfhydrogenase 1 subunit alpha (428 aa).

The Ni(2+) site is built by C65, C68, C418, and C421. C68 serves as a coordination point for Fe cation. Residue C421 participates in Fe cation binding.

The protein belongs to the [NiFe]/[NiFeSe] hydrogenase large subunit family. In terms of assembly, heterotetramer of alpha, beta, gamma and delta subunits. The nickel-containing alpha and delta subunits constitute the hydrogenase activity. The beta and gamma subunits (flavin-containing dimer) constitute the sulfur reductase activity. Requires Ni(2+) as cofactor. The cofactor is Fe cation.

It localises to the cytoplasm. It carries out the reaction H2 + NADP(+) = NADPH + H(+). In terms of biological role, part of a bifunctional enzyme complex that functions as an NADPH-dependent hydrogen-evolving hydrogenase with sulfur-reducing activity. May play a role in hydrogen cycling during fermentative growth. Activity not exhibited with NAD. The alpha and delta subunits form the hydrogenase component that catalyzes the reduction of protons to evolve hydrogen. In Pyrococcus furiosus (strain ATCC 43587 / DSM 3638 / JCM 8422 / Vc1), this protein is Sulfhydrogenase 1 subunit alpha.